A 1000-amino-acid chain; its full sequence is Kinesin-like protein CIN8 (1000 aa).

The span at Met1–Gly26 shows a compositional bias: polar residues. The tract at residues Met1 to His28 is disordered. Positions Asn36 to Ile477 constitute a Kinesin motor domain. Gly128–Thr135 is a binding site for ATP. Residues Ala220–Ser242 are compositionally biased toward low complexity. Disordered regions lie at residues Ala220 to Pro248 and Lys260 to Gln312. Residues Ser261–Val276 show a composition bias toward polar residues. Over residues Asn277–Asn301 the composition is skewed to low complexity. The segment covering Gly302–Gln312 has biased composition (polar residues). Coiled coils occupy residues Met518–His615 and Ile860–Ser904. Residues Val970–Glu1000 form a disordered region. At Ser972 the chain carries Phosphoserine. A compositionally biased stretch (basic and acidic residues) spans His976–Glu1000.

It belongs to the TRAFAC class myosin-kinesin ATPase superfamily. Kinesin family. BimC subfamily.

It is found in the cytoplasm. The protein resides in the cytoskeleton. Its subcellular location is the spindle. It localises to the mitochondrion. Functionally, elongates the mitotic spindle by interacting with spindle microtubules to generate an outward force pushing spindle poles apart. Following spindle assembly, CIN8 and KIP1 apparently act to oppose a force, possibly generated by KAR3, that draws separated poles back together. In Saccharomyces cerevisiae (strain ATCC 204508 / S288c) (Baker's yeast), this protein is Kinesin-like protein CIN8 (CIN8).